The primary structure comprises 97 residues: MEQAPEDQGPQREPYNEWTLELLEELKREAVRHFPRPWLHSLGQYIYETYGDTWAGVEAIIRILQQLLFIHFRIGCQHSRIGIIQQRRARRNGASRS.

The tract at residues 1–42 (MEQAPEDQGPQREPYNEWTLELLEELKREAVRHFPRPWLHSL) is homooligomerization. Ser79, Ser95, and Ser97 each carry phosphoserine; by host.

Belongs to the HIV-1 VPR protein family. In terms of assembly, homooligomer, may form homodimer. Interacts with p6-gag region of the Pr55 Gag precursor protein through a (Leu-X-X)4 motif near the C-terminus of the P6gag protein. Interacts with host UNG. May interact with host RAD23A/HHR23A. Interacts with host VPRBP/DCAF1, leading to hijack the CUL4A-RBX1-DDB1-DCAF1/VPRBP complex, mediating ubiquitination of host proteins such as TERT and ZGPAT and arrest of the cell cycle in G2 phase. In terms of processing, phosphorylated on several residues by host. These phosphorylations regulate VPR activity for the nuclear import of the HIV-1 pre-integration complex.

The protein resides in the virion. It localises to the host nucleus. The protein localises to the host extracellular space. In terms of biological role, during virus replication, may deplete host UNG protein, and incude G2-M cell cycle arrest. Acts by targeting specific host proteins for degradation by the 26S proteasome, through association with the cellular CUL4A-DDB1 E3 ligase complex by direct interaction with host VPRPB/DCAF-1. Cell cycle arrest reportedly occurs within hours of infection and is not blocked by antiviral agents, suggesting that it is initiated by the VPR carried into the virion. Additionally, VPR induces apoptosis in a cell cycle dependent manner suggesting that these two effects are mechanistically linked. Detected in the serum and cerebrospinal fluid of AIDS patient, VPR may also induce cell death to bystander cells. Functionally, during virus entry, plays a role in the transport of the viral pre-integration (PIC) complex to the host nucleus. This function is crucial for viral infection of non-dividing macrophages. May act directly at the nuclear pore complex, by binding nucleoporins phenylalanine-glycine (FG)-repeat regions. The sequence is that of Protein Vpr from Human immunodeficiency virus type 1 group M subtype B (isolate ARV2/SF2) (HIV-1).